We begin with the raw amino-acid sequence, 269 residues long: 4-hydroxy-tetrahydrodipicolinate reductase (269 aa).

Residues 11-16 (GASGRM) and glutamate 37 each bind NAD(+). Arginine 38 is a binding site for NADP(+). NAD(+) contacts are provided by residues 101 to 103 (GTT) and 125 to 128 (AGNM). Residue histidine 158 is the Proton donor/acceptor of the active site. Histidine 159 contacts (S)-2,3,4,5-tetrahydrodipicolinate. Lysine 162 functions as the Proton donor in the catalytic mechanism. 168-169 (GT) provides a ligand contact to (S)-2,3,4,5-tetrahydrodipicolinate.

The protein belongs to the DapB family.

The protein localises to the cytoplasm. It catalyses the reaction (S)-2,3,4,5-tetrahydrodipicolinate + NAD(+) + H2O = (2S,4S)-4-hydroxy-2,3,4,5-tetrahydrodipicolinate + NADH + H(+). The enzyme catalyses (S)-2,3,4,5-tetrahydrodipicolinate + NADP(+) + H2O = (2S,4S)-4-hydroxy-2,3,4,5-tetrahydrodipicolinate + NADPH + H(+). Its pathway is amino-acid biosynthesis; L-lysine biosynthesis via DAP pathway; (S)-tetrahydrodipicolinate from L-aspartate: step 4/4. Its function is as follows. Catalyzes the conversion of 4-hydroxy-tetrahydrodipicolinate (HTPA) to tetrahydrodipicolinate. The sequence is that of 4-hydroxy-tetrahydrodipicolinate reductase from Cereibacter sphaeroides (strain ATCC 17023 / DSM 158 / JCM 6121 / CCUG 31486 / LMG 2827 / NBRC 12203 / NCIMB 8253 / ATH 2.4.1.) (Rhodobacter sphaeroides).